The chain runs to 322 residues: 8-oxo-(d)GTP phosphatase (322 aa).

A disordered region spans residues 1-21; that stretch reads MMPVDDLQEIPLSKDTTEKSK. A Nudix hydrolase domain is found at 22–156; the sequence is HTVRAAGAVL…DDRKVLRRFV (135 aa). Substrate contacts are provided by residues 55 to 58, D60, and 65 to 67; these read RPRY and KGK. Mg(2+)-binding residues include K65, E81, and E85. Residues 66–87 carry the Nudix box motif; sequence GKLDQGETEPVAAAREIHEETG. Substrate is bound by residues Y101, K108, E127, and Y145. E127 contacts Mg(2+).

This sequence belongs to the Nudix hydrolase family. Forms head-to-tail homodimers. The cofactor is Mg(2+).

It carries out the reaction 8-oxo-dGTP + H2O = 8-oxo-dGDP + phosphate + H(+). The catalysed reaction is 8-oxo-GTP + H2O = 8-oxo-GDP + phosphate + H(+). The enzyme catalyses 8-oxo-dGDP + H2O = 8-oxo-dGMP + phosphate + H(+). It catalyses the reaction 8-oxo-GDP + H2O = 8-oxo-GMP + phosphate + H(+). It carries out the reaction P(1),P(6)-bis(5'-adenosyl) hexaphosphate + H2O = 2 ATP + 2 H(+). The catalysed reaction is P(1),P(5)-bis(5'-adenosyl) pentaphosphate + H2O = ADP + ATP + 2 H(+). The enzyme catalyses P(1),P(4)-bis(5'-adenosyl) tetraphosphate + H2O = AMP + ATP + 2 H(+). With respect to regulation, ap4A hydrolysis is inhibited by fluoride ions. Catalyzes the conversion of 8-oxo-dGTP to 8-oxo-dGDP, and 8-oxo-GTP to 8-oxo-GDP. At high enzyme concentrations, can also catalyze the conversion of 8-oxo-dGDP to 8-oxo-dGMP, and 8-oxo-GDP to 8-oxo-GMP. In addition, catalyzes the hydrolysis of the diadenosine polyphosphates diadenosine hexaphosphate (Ap6A), diadenosine pentaphosphate (Ap5A) and diadenosine tetraphosphate (Ap4A). This Mycolicibacterium smegmatis (strain ATCC 700084 / mc(2)155) (Mycobacterium smegmatis) protein is 8-oxo-(d)GTP phosphatase.